The primary structure comprises 34 residues: Non-cysteinic peptide Bs 10 (34 aa).

The interval 1–34 (VTMGYIKDGDGKKIAKKKNKNGRKHVEIDLNKVG) is disordered. The segment covering 14-23 (IAKKKNKNGR) has biased composition (basic residues). Over residues 24–34 (KHVEIDLNKVG) the composition is skewed to basic and acidic residues.

As to expression, expressed by the venom gland.

It localises to the secreted. The polypeptide is Non-cysteinic peptide Bs 10 (Hottentotta tamulus sindicus (Scorpion)).